The sequence spans 134 residues: Mitochondrial outer membrane protein OM14 (134 aa).

A disordered region spans residues 1–23; the sequence is MSATAKHDSNASPNSDSEDGHHH. Phosphoserine is present on residues S12 and S15. Helical transmembrane passes span 71–87 and 105–123; these read VVLV…CYLC and TVLA…DGII.

The protein localises to the mitochondrion outer membrane. In Saccharomyces cerevisiae (strain YJM789) (Baker's yeast), this protein is Mitochondrial outer membrane protein OM14 (OM14).